Consider the following 800-residue polypeptide: Protein translocase subunit SecA (800 aa).

ATP-binding positions include Gln85, 103 to 107, and Asp504; that span reads GEGKT.

It belongs to the SecA family. In terms of assembly, monomer and homodimer. Part of the essential Sec protein translocation apparatus which comprises SecA, SecYEG and auxiliary proteins SecDF. Other proteins may also be involved.

It localises to the cell membrane. The protein resides in the cytoplasm. It carries out the reaction ATP + H2O + cellular proteinSide 1 = ADP + phosphate + cellular proteinSide 2.. Its function is as follows. Part of the Sec protein translocase complex. Interacts with the SecYEG preprotein conducting channel. Has a central role in coupling the hydrolysis of ATP to the transfer of proteins into and across the cell membrane, serving as an ATP-driven molecular motor driving the stepwise translocation of polypeptide chains across the membrane. This Lactobacillus delbrueckii subsp. bulgaricus (strain ATCC 11842 / DSM 20081 / BCRC 10696 / JCM 1002 / NBRC 13953 / NCIMB 11778 / NCTC 12712 / WDCM 00102 / Lb 14) protein is Protein translocase subunit SecA.